The chain runs to 146 residues: 3-hydroxyacyl-[acyl-carrier-protein] dehydratase FabZ (146 aa).

Histidine 49 is an active-site residue.

Belongs to the thioester dehydratase family. FabZ subfamily.

The protein localises to the cytoplasm. It catalyses the reaction a (3R)-hydroxyacyl-[ACP] = a (2E)-enoyl-[ACP] + H2O. In terms of biological role, involved in unsaturated fatty acids biosynthesis. Catalyzes the dehydration of short chain beta-hydroxyacyl-ACPs and long chain saturated and unsaturated beta-hydroxyacyl-ACPs. This Pseudomonas putida (strain ATCC 700007 / DSM 6899 / JCM 31910 / BCRC 17059 / LMG 24140 / F1) protein is 3-hydroxyacyl-[acyl-carrier-protein] dehydratase FabZ.